The primary structure comprises 232 residues: Phosphoribosylformylglycinamidine synthase subunit PurQ (232 aa).

Positions 2-232 constitute a Glutamine amidotransferase type-1 domain; it reads RIGVITFPGS…SVVRSTLVEA (231 aa). Cys85 acts as the Nucleophile in catalysis. Catalysis depends on residues His194 and Glu196.

In terms of assembly, part of the FGAM synthase complex composed of 1 PurL, 1 PurQ and 2 PurS subunits.

The protein resides in the cytoplasm. The enzyme catalyses N(2)-formyl-N(1)-(5-phospho-beta-D-ribosyl)glycinamide + L-glutamine + ATP + H2O = 2-formamido-N(1)-(5-O-phospho-beta-D-ribosyl)acetamidine + L-glutamate + ADP + phosphate + H(+). It carries out the reaction L-glutamine + H2O = L-glutamate + NH4(+). It functions in the pathway purine metabolism; IMP biosynthesis via de novo pathway; 5-amino-1-(5-phospho-D-ribosyl)imidazole from N(2)-formyl-N(1)-(5-phospho-D-ribosyl)glycinamide: step 1/2. In terms of biological role, part of the phosphoribosylformylglycinamidine synthase complex involved in the purines biosynthetic pathway. Catalyzes the ATP-dependent conversion of formylglycinamide ribonucleotide (FGAR) and glutamine to yield formylglycinamidine ribonucleotide (FGAM) and glutamate. The FGAM synthase complex is composed of three subunits. PurQ produces an ammonia molecule by converting glutamine to glutamate. PurL transfers the ammonia molecule to FGAR to form FGAM in an ATP-dependent manner. PurS interacts with PurQ and PurL and is thought to assist in the transfer of the ammonia molecule from PurQ to PurL. This is Phosphoribosylformylglycinamidine synthase subunit PurQ from Leifsonia xyli subsp. xyli (strain CTCB07).